Reading from the N-terminus, the 466-residue chain is Endoglucanase E-5 (466 aa).

The signal sequence occupies residues 1–36 (MAKSPAARKGXPPVAVAVTAALALLIALLSPGVAQA). The region spanning 37–139 (AGLTATVTKE…TINGAPCDEG (103 aa)) is the CBM2 domain. Residues 129–166 (CTINGAPCDEGSEPGGPGGPGTPSPDPGTQPGTGTPVE) form a disordered region. E299 serves as the catalytic Proton donor. The active-site Nucleophile is E391.

The protein belongs to the glycosyl hydrolase 5 (cellulase A) family.

The catalysed reaction is Endohydrolysis of (1-&gt;4)-beta-D-glucosidic linkages in cellulose, lichenin and cereal beta-D-glucans.. The protein operates within glycan metabolism; cellulose degradation. The chain is Endoglucanase E-5 (celE) from Thermobifida fusca (Thermomonospora fusca).